The primary structure comprises 470 residues: V-type ATP synthase beta chain (470 aa).

This sequence belongs to the ATPase alpha/beta chains family.

Its function is as follows. Produces ATP from ADP in the presence of a proton gradient across the membrane. The V-type beta chain is a regulatory subunit. This Deinococcus geothermalis (strain DSM 11300 / CIP 105573 / AG-3a) protein is V-type ATP synthase beta chain.